Consider the following 281-residue polypeptide: ATP phosphoribosyltransferase (281 aa).

The protein belongs to the ATP phosphoribosyltransferase family. Long subfamily. It depends on Mg(2+) as a cofactor.

It localises to the cytoplasm. It carries out the reaction 1-(5-phospho-beta-D-ribosyl)-ATP + diphosphate = 5-phospho-alpha-D-ribose 1-diphosphate + ATP. The protein operates within amino-acid biosynthesis; L-histidine biosynthesis; L-histidine from 5-phospho-alpha-D-ribose 1-diphosphate: step 1/9. Feedback inhibited by histidine. Its function is as follows. Catalyzes the condensation of ATP and 5-phosphoribose 1-diphosphate to form N'-(5'-phosphoribosyl)-ATP (PR-ATP). Has a crucial role in the pathway because the rate of histidine biosynthesis seems to be controlled primarily by regulation of HisG enzymatic activity. The sequence is that of ATP phosphoribosyltransferase from Corynebacterium efficiens (strain DSM 44549 / YS-314 / AJ 12310 / JCM 11189 / NBRC 100395).